The primary structure comprises 335 residues: Probable BOI-related E3 ubiquitin-protein ligase 3 (335 aa).

The segment at 196-232 (LEEKVKSLCVENQIWRDVAQSNEATVNALRSNLQQVL) is WRD domain. An RING-type zinc finger spans residues 287 to 322 (CRSCGKGEASVLLLPCRHMCLCSVCGSSLNTCPICK).

Interacts with the DELLA proteins GAI, RGA, RGL1, RGL2 and RGL3.

The enzyme catalyses S-ubiquitinyl-[E2 ubiquitin-conjugating enzyme]-L-cysteine + [acceptor protein]-L-lysine = [E2 ubiquitin-conjugating enzyme]-L-cysteine + N(6)-ubiquitinyl-[acceptor protein]-L-lysine.. Its pathway is protein degradation; proteasomal ubiquitin-dependent pathway. Its function is as follows. Probable E3 ubiquitin-protein ligase. Has no effect on the stability of the DELLA proteins. This is Probable BOI-related E3 ubiquitin-protein ligase 3 (BRG3) from Arabidopsis thaliana (Mouse-ear cress).